Here is a 73-residue protein sequence, read N- to C-terminus: Bacterioferritin-associated ferredoxin (73 aa).

Cys4 and Cys6 together coordinate [2Fe-2S] cluster. The phosphate site is built by Arg26 and Arg29. [2Fe-2S] cluster is bound by residues Cys38 and Cys41. Position 46 (Lys46) interacts with phosphate.

This sequence belongs to the Bfd family. In terms of assembly, monomer. Interacts with BfrB; up to 12 Bfd proteins can bind to the BfrB bacterioferritin complex (BFR). One Bfd protein binds to a BfrB dimer in the BFR, with the [2Fe-2S] cluster positioned about 22 Angstroms above the heme of BfrB. Does not interact with FtnA. [2Fe-2S] cluster is required as a cofactor. Requires phosphate as cofactor.

Functionally, required for mobilization of iron from the bacterioferritin (BFR) complex, composed of BfrB and FtnA in varying proportions; mobilization requires the [2Fe-2S] cluster of this protein. Reduction of the BfrB heme group occurs in the presence of Bfd, strongly suggesting that the BfrB-Bfd complex allows heme to mediate electron transfer from FPR to the Fe(3+) iron core in the BFR prior to its release as Fe(2+). In Pseudomonas aeruginosa (strain ATCC 15692 / DSM 22644 / CIP 104116 / JCM 14847 / LMG 12228 / 1C / PRS 101 / PAO1), this protein is Bacterioferritin-associated ferredoxin.